A 454-amino-acid chain; its full sequence is MNFLGKKVLVVGAGKSGISAIELLSQEGAQTILYDANEEINKEEISKKLPIDYKGDIILGGLSSELKSELDVVVLSPGVPTDLDYVKELKSAEIPIIGEVELAYNFSKGKIAAITGTNGKTSTTTLVGEIMKTYYKSVFVVGNIGVPYTQMVKNTENDSVTVAEMSSFQLETIETFRPDVSAILNITPDHLNRHHTMEAYIEAKVNITKNQTKEDTCILNYEDSYLRTVSGRIPATILWFSSVRELERGLFLRENHIIYRDDEKECVVCDVNELQIIGKHNYENVMAAVGIAIALKVPMDFIREAVTKFRGVEHRIEYVTTKRGVKYYNDSKGTNPDASIQAIKAMQTKTLLIGGGYDKDSDYDDWIKAFDDKVTYLVLLGQTREKIANAAKRLGVKNIVLVDSLSEAVDFCAEHAGVGETVLLSPCCASWGMFKDYEERGMLFKEYVHALKDE.

116–122 (GTNGKTS) contributes to the ATP binding site.

The protein belongs to the MurCDEF family.

It localises to the cytoplasm. It carries out the reaction UDP-N-acetyl-alpha-D-muramoyl-L-alanine + D-glutamate + ATP = UDP-N-acetyl-alpha-D-muramoyl-L-alanyl-D-glutamate + ADP + phosphate + H(+). It functions in the pathway cell wall biogenesis; peptidoglycan biosynthesis. In terms of biological role, cell wall formation. Catalyzes the addition of glutamate to the nucleotide precursor UDP-N-acetylmuramoyl-L-alanine (UMA). In Lachnoclostridium phytofermentans (strain ATCC 700394 / DSM 18823 / ISDg) (Clostridium phytofermentans), this protein is UDP-N-acetylmuramoylalanine--D-glutamate ligase.